A 445-amino-acid polypeptide reads, in one-letter code: Arginine biosynthesis bifunctional protein ArgJ, mitochondrial (445 aa).

6 residues coordinate substrate: Thr189, Lys215, Thr226, Glu312, Asn440, and Ser445. Thr226 functions as the Nucleophile in the catalytic mechanism.

The protein belongs to the ArgJ family. Heterodimer of an alpha and a beta chain. Post-translationally, the alpha and beta chains are autoproteolytically processed from a single precursor protein within the mitochondrion.

The protein resides in the mitochondrion matrix. It catalyses the reaction N(2)-acetyl-L-ornithine + L-glutamate = N-acetyl-L-glutamate + L-ornithine. The enzyme catalyses L-glutamate + acetyl-CoA = N-acetyl-L-glutamate + CoA + H(+). It participates in amino-acid biosynthesis; L-arginine biosynthesis; L-ornithine and N-acetyl-L-glutamate from L-glutamate and N(2)-acetyl-L-ornithine (cyclic): step 1/1. The protein operates within amino-acid biosynthesis; L-arginine biosynthesis; N(2)-acetyl-L-ornithine from L-glutamate: step 1/4. Its function is as follows. Catalyzes two activities which are involved in the cyclic version of arginine biosynthesis: the synthesis of acetylglutamate from glutamate and acetyl-CoA, and of ornithine by transacetylation between acetylornithine and glutamate. In Schizosaccharomyces pombe (strain 972 / ATCC 24843) (Fission yeast), this protein is Arginine biosynthesis bifunctional protein ArgJ, mitochondrial.